The sequence spans 430 residues: Histidine--tRNA ligase (430 aa).

The protein belongs to the class-II aminoacyl-tRNA synthetase family. In terms of assembly, homodimer.

The protein resides in the cytoplasm. It catalyses the reaction tRNA(His) + L-histidine + ATP = L-histidyl-tRNA(His) + AMP + diphosphate + H(+). The protein is Histidine--tRNA ligase of Anaplasma marginale (strain Florida).